The following is a 613-amino-acid chain: DNA mismatch repair protein MutL (613 aa).

This sequence belongs to the DNA mismatch repair MutL/HexB family.

Functionally, this protein is involved in the repair of mismatches in DNA. It is required for dam-dependent methyl-directed DNA mismatch repair. May act as a 'molecular matchmaker', a protein that promotes the formation of a stable complex between two or more DNA-binding proteins in an ATP-dependent manner without itself being part of a final effector complex. The chain is DNA mismatch repair protein MutL from Bradyrhizobium sp. (strain ORS 278).